The primary structure comprises 1500 residues: Copper-transporting ATPase 1 (1500 aa).

The Cytoplasmic segment spans residues 1 to 653 (MDPSMGVNSV…KREIRQWRRS (653 aa)). 2 HMA domains span residues 8-74 (NSVT…FDAV) and 85-151 (TDTL…LDTG). The Cu(+) site is built by Thr-18, Cys-19, and Cys-22. A Phosphothreonine modification is found at Thr-152. The region spanning 171 to 237 (VVLKMKVEGM…QIEAMGFPAF (67 aa)) is the HMA 3 domain. Residues Cys-182 and Cys-185 each contribute to the Cu(+) site. Phosphoserine is present on Ser-270. An HMA 4 domain is found at 277 to 343 (STATFIIDGM…AIEAVSPGLY (67 aa)). The Cu(+) site is built by Cys-288 and Cys-291. A Phosphothreonine modification is found at Thr-327. Phosphoserine occurs at positions 339, 353, 357, and 362. 3 consecutive HMA domains span residues 377 to 443 (QETV…FDAT), 488 to 554 (SKCY…FGAT), and 564 to 630 (GVLE…FEAS). Positions 388, 391, 499, 502, 575, and 578 each coordinate Cu(+). The helical transmembrane segment at 654-675 (FLVSLFFCIPVMGLMIYMMVMD) threads the bilayer. Residues 676 to 714 (HHFATLHHNQNMSKEEMINLHSSMFLERQILPGLSVMNL) are Extracellular-facing. The N-linked (GlcNAc...) asparagine glycan is linked to Asn-686. The helical transmembrane segment at 715 to 734 (LSFLLCVPVQFFGGWYFYIQ) threads the bilayer. The Cytoplasmic segment spans residues 735–741 (AYKALKH). The chain crosses the membrane as a helical span at residues 742–762 (KTANMDVLIVLATTIAFAYSL). Topologically, residues 763–781 (IILLVAMYERAKVNPITFF) are extracellular. A helical membrane pass occupies residues 782-802 (DTPPMLFVFIALGRWLEHIAK). Topologically, residues 803–936 (GKTSEALAKL…KAPIQQFADK (134 aa)) are cytoplasmic. The chain crosses the membrane as a helical span at residues 937 to 959 (LSGYFVPFIVFVSIATLLVWIVI). At 960 to 989 (GFLNFEIVETYFPGYNRSISRTETIIRFAF) the chain is on the extracellular side. N-linked (GlcNAc...) asparagine glycosylation is present at Asn-975. The chain crosses the membrane as a helical span at residues 990-1011 (QASITVLCIACPCSLGLATPTA). At 1012-1356 (VMVGTGVGAQ…LSRKTVKRIR (345 aa)) the chain is on the cytoplasmic side. Residue Asp-1044 is the 4-aspartylphosphate intermediate of the active site. Residue Glu-1081 participates in ATP binding. Thr-1212 carries the post-translational modification Phosphothreonine. Mg(2+) is bound by residues Asp-1301 and Asp-1305. A helical transmembrane segment spans residues 1357 to 1374 (INFVFALIYNLVGIPIAA). Over 1375–1385 (GVFMPIGLVLQ) the chain is Extracellular. Residues 1386-1405 (PWMGSAAMAASSVSVVLSSL) form a helical membrane-spanning segment. Over 1406–1500 (FLKLYRKPTY…DFREDDDTAL (95 aa)) the chain is Cytoplasmic. Residues Ser-1430, Ser-1432, Ser-1460, Ser-1463, and Ser-1466 each carry the phosphoserine modification. The Endocytosis signal signature appears at 1467–1468 (LL). A phosphoserine mark is found at Ser-1469, Ser-1473, Ser-1476, and Ser-1486. A PDZD11-binding region spans residues 1486–1500 (SLLVGDFREDDDTAL). Positions 1487-1488 (LL) match the Endocytosis signal motif.

Belongs to the cation transport ATPase (P-type) (TC 3.A.3) family. Type IB subfamily. In terms of assembly, monomer. Interacts with PDZD11. Interacts with ATOX1 and COMMD1. Interacts with TYRP1. Directly interacts with SOD3; this interaction is copper-dependent and is required for SOD3 activity. As to expression, widely expressed including in heart, brain, lung, muscle, kidney, pancreas, and to a lesser extent placenta. Expressed in fibroblasts, aortic smooth muscle cells, aortic endothelial cells and umbilical vein endothelial cells (at protein level). Expressed in cerebellum and brain cortex.

Its subcellular location is the golgi apparatus. It is found in the trans-Golgi network membrane. It localises to the cell membrane. The protein resides in the melanosome membrane. The protein localises to the early endosome membrane. Its subcellular location is the cell projection. It is found in the axon. It localises to the dendrite. The protein resides in the postsynaptic density. The protein localises to the cytoplasm. Its subcellular location is the cytosol. It is found in the endoplasmic reticulum. It carries out the reaction Cu(+)(in) + ATP + H2O = Cu(+)(out) + ADP + phosphate + H(+). In terms of biological role, ATP-driven copper (Cu(+)) ion pump that plays an important role in intracellular copper ion homeostasis. Within a catalytic cycle, acquires Cu(+) ion from donor protein on the cytoplasmic side of the membrane and delivers it to acceptor protein on the lumenal side. The transfer of Cu(+) ion across the membrane is coupled to ATP hydrolysis and is associated with a transient phosphorylation that shifts the pump conformation from inward-facing to outward-facing state. Under physiological conditions, at low cytosolic copper concentration, it is localized at the trans-Golgi network (TGN) where it transfers Cu(+) ions to cuproenzymes of the secretory pathway. Upon elevated cytosolic copper concentrations, it relocalizes to the plasma membrane where it is responsible for the export of excess Cu(+) ions. May play a dual role in neuron function and survival by regulating cooper efflux and neuronal transmission at the synapse as well as by supplying Cu(+) ions to enzymes such as PAM, TYR and SOD3. In the melanosomes of pigmented cells, provides copper cofactor to TYR to form an active TYR holoenzyme for melanin biosynthesis. This chain is Copper-transporting ATPase 1, found in Homo sapiens (Human).